We begin with the raw amino-acid sequence, 446 residues long: ATP synthase subunit b-delta (446 aa).

Residues 1-168 (MSTFIGQLVG…PAAADVQYPL (168 aa)) are ATP synthase subunit b. Residues 4–24 (FIGQLVGFAAIVFLVVRYVVP) traverse the membrane as a helical segment. An ATP synthase subunit delta region spans residues 169–446 (MTKMRSSSRV…LAAAEAQLPD (278 aa)).

The protein in the N-terminal section; belongs to the ATPase B chain family. This sequence in the C-terminal section; belongs to the ATPase delta chain family. As to quaternary structure, F-type ATPases have 2 components, F(1) - the catalytic core - and F(0) - the membrane proton channel. F(1) has five subunits: alpha(3), beta(3), gamma(1), delta(1), epsilon(1). F(0) has three main subunits: a(1), b(2) and c(10-14). The alpha and beta chains form an alternating ring which encloses part of the gamma chain. F(1) is attached to F(0) by a central stalk formed by the gamma and epsilon chains, while a peripheral stalk is formed by the delta and b chains.

The protein localises to the cell membrane. F(1)F(0) ATP synthase produces ATP from ADP in the presence of a proton or sodium gradient. F-type ATPases consist of two structural domains, F(1) containing the extramembraneous catalytic core and F(0) containing the membrane proton channel, linked together by a central stalk and a peripheral stalk. During catalysis, ATP synthesis in the catalytic domain of F(1) is coupled via a rotary mechanism of the central stalk subunits to proton translocation. Functionally, this fusion protein includes a component of the F(0) channel (subunit b) and of the F(1) subunit (subunit delta). Two copies of subunit b and one of delta together form the peripheral 'stator' stalk which links F(1) to F(0). The sequence is that of ATP synthase subunit b-delta (atpFH) from Mycobacterium avium (strain 104).